Reading from the N-terminus, the 254-residue chain is Alcohol dehydrogenase 2 (254 aa).

10-33 (FVAGLGGIGLDTSREIVKSGPKNL) is a binding site for NAD(+). Substrate is bound at residue Ser-138. The active-site Proton acceptor is the Tyr-151.

It belongs to the short-chain dehydrogenases/reductases (SDR) family. In terms of assembly, homodimer.

It catalyses the reaction a primary alcohol + NAD(+) = an aldehyde + NADH + H(+). The enzyme catalyses a secondary alcohol + NAD(+) = a ketone + NADH + H(+). The protein is Alcohol dehydrogenase 2 (Adh2) of Drosophila hydei (Fruit fly).